The sequence spans 300 residues: Zinc finger protein 705B (300 aa).

A KRAB domain is found at 7–78 (VTFEDVAIDF…GRVFLQDQNP (72 aa)). 3 consecutive C2H2-type zinc fingers follow at residues 172-194 (YQCNLCEKAYTNCFYLRRHKMTH), 200-222 (YACHLCGKAFTQCSHLRRHEKTH), and 228-250 (YKCHQCGKAFIQSFNLRRHERTH). The segment at 256–278 (YECDKSGKAFSQSSGFRGNKIIH) adopts a C2H2-type 4; degenerate zinc-finger fold.

This sequence belongs to the krueppel C2H2-type zinc-finger protein family.

Its subcellular location is the nucleus. In terms of biological role, may be involved in transcriptional regulation. The chain is Zinc finger protein 705B (ZNF705B) from Homo sapiens (Human).